A 128-amino-acid polypeptide reads, in one-letter code: Ribonuclease P protein component (128 aa).

This sequence belongs to the RnpA family. As to quaternary structure, consists of a catalytic RNA component (M1 or rnpB) and a protein subunit.

It catalyses the reaction Endonucleolytic cleavage of RNA, removing 5'-extranucleotides from tRNA precursor.. In terms of biological role, RNaseP catalyzes the removal of the 5'-leader sequence from pre-tRNA to produce the mature 5'-terminus. It can also cleave other RNA substrates such as 4.5S RNA. The protein component plays an auxiliary but essential role in vivo by binding to the 5'-leader sequence and broadening the substrate specificity of the ribozyme. This chain is Ribonuclease P protein component, found in Prochlorococcus marinus (strain MIT 9301).